Here is a 232-residue protein sequence, read N- to C-terminus: MIKLLGVFFVPIIPFSFVVDYVFENCKSCRNYFFPVLVLLGVLVGALGVGKAGTLLILLAVLTSIAYTYRLFRVQNYEEWLLTYYIAVASLSWLHPEKMLFFISAFAIPLTVIHFLILHMKNQGAKPEVEEFKGIATYLPVLGTLAFVALVSSLVIAPAYAFFTLYGVFKGNLILTPILLIEWLVWLWVGFKMFSPVFFEEKAEAPKYEDLDFSEVFPLTFLLFLGLLLPVL.

Transmembrane regions (helical) follow at residues 4–24 (LLGV…YVFE), 42–62 (VLVG…LAVL), 100–120 (LFFI…ILHM), 145–165 (LAFV…FFTL), and 171–191 (GNLI…WVGF).

The protein localises to the cell membrane. This is an uncharacterized protein from Aquifex aeolicus (strain VF5).